Here is a 64-residue protein sequence, read N- to C-terminus: Large ribosomal subunit protein bL35 (64 aa).

This sequence belongs to the bacterial ribosomal protein bL35 family.

The sequence is that of Large ribosomal subunit protein bL35 from Pelodictyon phaeoclathratiforme (strain DSM 5477 / BU-1).